The primary structure comprises 211 residues: Guanylate kinase (211 aa).

Residues 7 to 187 (GLLIILSGPS…AADRIIAIIR (181 aa)) form the Guanylate kinase-like domain. An ATP-binding site is contributed by 14–21 (GPSGVGKA).

The protein belongs to the guanylate kinase family.

The protein resides in the cytoplasm. The enzyme catalyses GMP + ATP = GDP + ADP. Essential for recycling GMP and indirectly, cGMP. The chain is Guanylate kinase from Aster yellows witches'-broom phytoplasma (strain AYWB).